Consider the following 522-residue polypeptide: Peptide chain release factor 3 (522 aa).

Residues 9-276 (KKRRTFAIIS…SFVNLAPAPQ (268 aa)) form the tr-type G domain. GTP is bound by residues 18-25 (SHPDAGKT), 86-90 (DTPGH), and 140-143 (NKLD).

Belongs to the TRAFAC class translation factor GTPase superfamily. Classic translation factor GTPase family. PrfC subfamily.

Its subcellular location is the cytoplasm. In terms of biological role, increases the formation of ribosomal termination complexes and stimulates activities of RF-1 and RF-2. It binds guanine nucleotides and has strong preference for UGA stop codons. It may interact directly with the ribosome. The stimulation of RF-1 and RF-2 is significantly reduced by GTP and GDP, but not by GMP. The protein is Peptide chain release factor 3 of Lactobacillus johnsonii (strain CNCM I-12250 / La1 / NCC 533).